The sequence spans 187 residues: UPF0340 protein SP_0663 (187 aa).

Belongs to the UPF0340 family.

The sequence is that of UPF0340 protein SP_0663 from Streptococcus pneumoniae serotype 4 (strain ATCC BAA-334 / TIGR4).